Consider the following 1309-residue polypeptide: Phospholipase A I (1309 aa).

LRR repeat units follow at residues 155-178 (LPLL…IGKL), 180-201 (NLKI…LRQC), 203-223 (GLVE…DFRA), and 224-248 (MAGL…PLHQ). ARM repeat units follow at residues 315 to 356 (DEGN…SLAR), 401 to 439 (SVSQ…NLAF), and 440 to 481 (CLEN…ILGE). Residues 502-746 (LTMDGGGMKG…VANNPTIFAI (245 aa)) enclose the PNPLA domain. A GXGXXG motif is present at residues 506-511 (GGGMKG). The GXSXG signature appears at 538–542 (GTSTG). Serine 540 (nucleophile) is an active-site residue. Catalysis depends on aspartate 733, which acts as the Proton acceptor. Residues 733-735 (DGA) carry the DGA/G motif. The tract at residues 1183 to 1253 (VIGPSNEPQE…EDSDHEKTNR (71 aa)) is disordered. Residues 1188–1208 (NEPQETPLITSQGSSEYNIGD) show a composition bias toward polar residues. The span at 1216–1235 (GEEEDEDEEVNEETEREEME) shows a compositional bias: acidic residues.

Belongs to the patatin family.

The protein resides in the plastid. Its subcellular location is the chloroplast. Its function is as follows. Possesses non-specific lipolytic acyl hydrolase (LAH) activity. Catalyzes the hydrolysis of the galactolipids monogalactosyldiacylglycerol (MGDG) and digalactosyldiacylglycerol (DGDG), and less efficiently the phoshpolipids phosphatidylcholine (PC), phosphatidylethanolamine (PE), phosphatidylglycerol (PG), phosphatidylserine (PS) and phosphatidylinositol (PI). Hydrolyzes phospholipids at both the sn-1 and sn-2 positions. Involved in basal jasmonic acid production and promotes resistance to the necrotrophic fungal pathogen Botrytis cinerea. The polypeptide is Phospholipase A I (PLA1) (Arabidopsis thaliana (Mouse-ear cress)).